Here is a 236-residue protein sequence, read N- to C-terminus: EP300-interacting inhibitor of differentiation 2 (236 aa).

The span at 1-15 shows a compositional bias: polar residues; it reads MSQLPAVSSAPQTGA. The segment at 1 to 102 is disordered; sequence MSQLPAVSSA…REGPAAAAAS (102 aa). 2 stretches are compositionally biased toward low complexity: residues 32 to 68 and 75 to 102; these read RALP…GRVA and AAAA…AAAS. Arg-63 and Arg-79 each carry omega-N-methylarginine. A coiled-coil region spans residues 170–190; it reads RIQELEERRRRFVEACRAREA.

In terms of assembly, heterodimer with EID2B. Interacts with the C-terminus of EP300. Interacts with HDAC1 and HDAC2. Interacts with SMAD2, SMAD4 and with the MH2 domain of SMAD3. In terms of tissue distribution, expressed in heart, brain, kidney and pancreas. Not detected in placenta.

It localises to the nucleus. Functionally, interacts with EP300 and acts as a repressor of MYOD-dependent transcription and muscle differentiation. Inhibits EP300 histone acetyltransferase activity. Acts as a repressor of TGFB/SMAD transcriptional responses. May act as a repressor of the TGFB/SMAD3-dependent signaling by selectively blocking formation of TGFB-induced SMAD3-SMAD4 complex. The polypeptide is EP300-interacting inhibitor of differentiation 2 (Mus musculus (Mouse)).